Here is a 364-residue protein sequence, read N- to C-terminus: Matrix protein (364 aa).

The FPIV motif motif lies at 23–26 (FPIV).

The protein belongs to the morbillivirus/respirovirus/rubulavirus M protein family.

It localises to the virion. Functionally, the M protein has a crucial role in virus assembly and interacts with the RNP complex as well as with the viral membrane. The protein is Matrix protein (M) of Gallus gallus (Chicken).